The sequence spans 348 residues: L-asparaginase 2 (348 aa).

The first 22 residues, 1-22 (MEFFKKTALAALVMGFSGAALA), serve as a signal peptide directing secretion. The region spanning 24–348 (PNITILATGG…QQIQQIFNQY (325 aa)) is the Asparaginase/glutaminase domain. Catalysis depends on Thr-34, which acts as the O-isoaspartyl threonine intermediate. Residues 80–81 (SQ) and 111–112 (TD) contribute to the substrate site. A disulfide bond links Cys-99 and Cys-127.

This sequence belongs to the asparaginase 1 family. In terms of assembly, homotetramer.

Its subcellular location is the periplasm. It catalyses the reaction L-asparagine + H2O = L-aspartate + NH4(+). In Escherichia coli (strain K12), this protein is L-asparaginase 2 (ansB).